Reading from the N-terminus, the 253-residue chain is Sulfate transporter CysZ (253 aa).

Transmembrane regions (helical) follow at residues phenylalanine 31 to phenylalanine 51, leucine 75 to isoleucine 95, isoleucine 151 to tryptophan 171, and isoleucine 222 to valine 242.

The protein belongs to the CysZ family.

It localises to the cell inner membrane. High affinity, high specificity proton-dependent sulfate transporter, which mediates sulfate uptake. Provides the sulfur source for the cysteine synthesis pathway. The chain is Sulfate transporter CysZ from Escherichia coli O8 (strain IAI1).